The primary structure comprises 427 residues: UDP-N-acetylglucosamine 1-carboxyvinyltransferase (427 aa).

22-23 (KN) is a phosphoenolpyruvate binding site. Arg92 contributes to the UDP-N-acetyl-alpha-D-glucosamine binding site. Catalysis depends on Asp116, which acts as the Proton donor. 2 residues coordinate UDP-N-acetyl-alpha-D-glucosamine: Asp312 and Met334.

This sequence belongs to the EPSP synthase family. MurA subfamily.

It localises to the cytoplasm. It carries out the reaction phosphoenolpyruvate + UDP-N-acetyl-alpha-D-glucosamine = UDP-N-acetyl-3-O-(1-carboxyvinyl)-alpha-D-glucosamine + phosphate. The protein operates within cell wall biogenesis; peptidoglycan biosynthesis. Its function is as follows. Cell wall formation. Adds enolpyruvyl to UDP-N-acetylglucosamine. The chain is UDP-N-acetylglucosamine 1-carboxyvinyltransferase from Borreliella burgdorferi (strain ATCC 35210 / DSM 4680 / CIP 102532 / B31) (Borrelia burgdorferi).